Here is a 462-residue protein sequence, read N- to C-terminus: Integrator complex subunit 12 (462 aa).

A disordered region spans residues 39–132 (LARGIDSSYR…PETRSSPITV (94 aa)). The segment covering 59–86 (ISSTKTVSVKQEPKTSSSLPSGNNNGKV) has biased composition (polar residues). Lysine 68 participates in a covalent cross-link: Glycyl lysine isopeptide (Lys-Gly) (interchain with G-Cter in SUMO2). The segment covering 88 to 125 (TTEKVKKEGEKRPADKMKSDITEGADVPKKPRLEKPET) has biased composition (basic and acidic residues). At serine 128 the chain carries Phosphoserine. The PHD-type zinc-finger motif lies at 159–215 (GLACVVCRQMTVASGNQLVECQECHNLYHQDCHKPQVTDKEVTDPRLVWYCARCTRQ). Lysine 254 is covalently cross-linked (Glycyl lysine isopeptide (Lys-Gly) (interchain with G-Cter in SUMO2)). Over residues 305-328 (PSTAKLSSAAQNNSGKPATSSANQ) the composition is skewed to polar residues. Residues 305-462 (PSTAKLSSAA…KKAAQKKLKK (158 aa)) are disordered. 2 stretches are compositionally biased toward low complexity: residues 347–358 (KIGSSNSTSPTV) and 382–431 (VSKV…PSAS). A compositionally biased stretch (polar residues) spans 434–443 (GPTSQESQLN). Positions 449–462 (QMVKKKAAQKKLKK) are enriched in basic residues.

It belongs to the Integrator subunit 12 family. As to quaternary structure, component of the Integrator complex, composed of core subunits INTS1, INTS2, INTS3, INTS4, INTS5, INTS6, INTS7, INTS8, INTS9/RC74, INTS10, INTS11/CPSF3L, INTS12, INTS13, INTS14 and INTS15. The core complex associates with protein phosphatase 2A subunits PPP2CA and PPP2R1A, to form the Integrator-PP2A (INTAC) complex. Post-translationally, dephosphorylated at Ser-128 by the PNUTS-PP1 complex, promoting RNA polymerase II transcription pause-release.

Its subcellular location is the nucleus. In terms of biological role, component of the integrator complex, a multiprotein complex that terminates RNA polymerase II (Pol II) transcription in the promoter-proximal region of genes. The integrator complex provides a quality checkpoint during transcription elongation by driving premature transcription termination of transcripts that are unfavorably configured for transcriptional elongation: the complex terminates transcription by (1) catalyzing dephosphorylation of the C-terminal domain (CTD) of Pol II subunit POLR2A/RPB1 and SUPT5H/SPT5, (2) degrading the exiting nascent RNA transcript via endonuclease activity and (3) promoting the release of Pol II from bound DNA. The integrator complex is also involved in terminating the synthesis of non-coding Pol II transcripts, such as enhancer RNAs (eRNAs), small nuclear RNAs (snRNAs), telomerase RNAs and long non-coding RNAs (lncRNAs). Mediates recruitment of cytoplasmic dynein to the nuclear envelope, probably as component of the integrator complex. The protein is Integrator complex subunit 12 (INTS12) of Bos taurus (Bovine).